A 397-amino-acid polypeptide reads, in one-letter code: Alpha-2B adrenergic receptor (397 aa).

Residues 1-25 (AIAAIIIFLILFTIFGNALVILAVL) form a helical membrane-spanning segment. The Cytoplasmic portion of the chain corresponds to 26–36 (TSRSLRAPQNL). The helical transmembrane segment at 37–62 (FLVSLAAADILVATLIIPFSLANELL) threads the bilayer. Over 63–72 (GYWYFRRMWC) the chain is Extracellular. The cysteines at positions 72 and 151 are disulfide-linked. The helical transmembrane segment at 73–95 (KVYLALDVLFCTSSIVHLCAISL) threads the bilayer. Topologically, residues 96-117 (DRYWAVSRALEYNSKRTPRRIK) are cytoplasmic. Residues 118 to 140 (CIILMVWLIAAVISLPSLVYKGD) form a helical membrane-spanning segment. The Extracellular segment spans residues 141-156 (QGPQPSGAPQCNLNQE). The helical transmembrane segment at 157–180 (TWYILASSIGSFFAPCLIMILVYL) threads the bilayer. Residues 181–361 (RIYLIAKRSH…LSREKRFTFV (181 aa)) lie on the Cytoplasmic side of the membrane. Disordered regions lie at residues 193-212 (GPRA…RQVP) and 230-319 (AAGE…LQQP). Residues 280–300 (SLEEEAEEEEEGEEEREEECE) are compositionally biased toward acidic residues. Low complexity predominate over residues 301-319 (PQALPASPASACSPPLQQP). A helical membrane pass occupies residues 362 to 385 (LAVVIGVFVLCWFPFFFSYSLGAI). The Extracellular segment spans residues 386 to 394 (CPQQCKVPH). The chain crosses the membrane as a helical span at residues 395-397 (DLF).

Belongs to the G-protein coupled receptor 1 family. Adrenergic receptor subfamily. ADRA2B sub-subfamily. In terms of assembly, interacts with RAB26. Interacts with PPP1R9B.

Its subcellular location is the cell membrane. In terms of biological role, alpha-2 adrenergic receptors mediate the catecholamine-induced inhibition of adenylate cyclase through the action of G proteins. This Talpa europaea (European mole) protein is Alpha-2B adrenergic receptor (ADRA2B).